We begin with the raw amino-acid sequence, 502 residues long: ATP synthase subunit beta, chloroplastic (502 aa).

Ser-17 carries the post-translational modification Phosphoserine. 176 to 183 (GGAGVGKT) lines the ATP pocket.

Belongs to the ATPase alpha/beta chains family. As to quaternary structure, F-type ATPases have 2 components, CF(1) - the catalytic core - and CF(0) - the membrane proton channel. CF(1) has five subunits: alpha(3), beta(3), gamma(1), delta(1), epsilon(1). CF(0) has four main subunits: a(1), b(1), b'(1) and c(9-12).

It is found in the plastid. The protein resides in the chloroplast thylakoid membrane. The catalysed reaction is ATP + H2O + 4 H(+)(in) = ADP + phosphate + 5 H(+)(out). Produces ATP from ADP in the presence of a proton gradient across the membrane. The catalytic sites are hosted primarily by the beta subunits. The protein is ATP synthase subunit beta, chloroplastic of Lepidium virginicum (Virginia pepperweed).